Reading from the N-terminus, the 304-residue chain is Ribosomal RNA small subunit methyltransferase H (304 aa).

S-adenosyl-L-methionine-binding positions include 37–39, aspartate 57, phenylalanine 79, aspartate 100, and histidine 107; that span reads GGH.

It belongs to the methyltransferase superfamily. RsmH family.

Its subcellular location is the cytoplasm. The enzyme catalyses cytidine(1402) in 16S rRNA + S-adenosyl-L-methionine = N(4)-methylcytidine(1402) in 16S rRNA + S-adenosyl-L-homocysteine + H(+). Functionally, specifically methylates the N4 position of cytidine in position 1402 (C1402) of 16S rRNA. The polypeptide is Ribosomal RNA small subunit methyltransferase H (Bacteroides fragilis (strain ATCC 25285 / DSM 2151 / CCUG 4856 / JCM 11019 / LMG 10263 / NCTC 9343 / Onslow / VPI 2553 / EN-2)).